The primary structure comprises 484 residues: Serine/arginine-rich splicing factor 11 (484 aa).

Positions 1–33 (MSNTTVVPSTAGPGPSGGPGGGGGGGGGGGGTE) are disordered. The residue at position 2 (S2) is an N-acetylserine. The segment covering 14-32 (GPSGGPGGGGGGGGGGGGT) has biased composition (gly residues). In terms of domain architecture, RRM spans 33–113 (EVIQVTNVSP…ALIVVPYAEG (81 aa)). K197 is covalently cross-linked (Glycyl lysine isopeptide (Lys-Gly) (interchain with G-Cter in SUMO2)). At S207 the chain carries Phosphoserine. K211 participates in a covalent cross-link: Glycyl lysine isopeptide (Lys-Gly) (interchain with G-Cter in SUMO2). S212 carries the post-translational modification Phosphoserine. Residues 233–484 (ISAAIEPDKK…HHEEDMDMSD (252 aa)) are disordered. Residues 244-308 (EKRRHSRSRS…ERGRRSRSTS (65 aa)) show a composition bias toward basic residues. 10 repeat units span residues 247–255 (RHSRSRSRS), 258–265 (RRTPSSSR), 267–274 (RRSRSRSR), 275–282 (RRSHSKSR), 285–292 (RRSKSPRR), 293–300 (RRSHSRER), 302–309 (RRSRSTSK), 321–328 (KRSKTPPK), 334–341 (RRSRSASR), and 346–353 (RRSRSGTR). The interval 247 to 353 (RHSRSRSRSR…RRRRSRSGTR (107 aa)) is 10 X 8 AA approximate repeats of R-R-S-R-S-R-S-R. The segment covering 309 to 320 (KTRDKKKEDKEK) has biased composition (basic and acidic residues). Phosphoserine is present on S323. At T325 the chain carries Phosphothreonine. Positions 334–379 (RRSRSASRERRRRRSRSGTRSPKKPRSPKRKLSRSPSPRRHKKEKK) are enriched in basic residues. 3 stretches are compositionally biased toward basic and acidic residues: residues 380–395 (KDKD…ERST), 402–424 (KDKE…VTRD), and 433–478 (DSEK…HHEE). Residues S414 and S434 each carry the phosphoserine modification. Phosphothreonine is present on T447. S449, S456, S464, and S483 each carry phosphoserine.

Belongs to the splicing factor SR family. As to quaternary structure, interacts with PUF60.

It is found in the nucleus. May function in pre-mRNA splicing. This chain is Serine/arginine-rich splicing factor 11 (SRSF11), found in Homo sapiens (Human).